The chain runs to 737 residues: Phosphoribosylformylglycinamidine synthase subunit PurL (737 aa).

H48 is an active-site residue. ATP is bound by residues Y51 and K90. Residue E92 coordinates Mg(2+). Substrate-binding positions include 93-96 and R115; that span reads SHNH. H94 (proton acceptor) is an active-site residue. D116 contributes to the Mg(2+) binding site. Q244 is a binding site for substrate. D272 is a Mg(2+) binding site. 316–318 is a substrate binding site; the sequence is ESQ. Residues D500 and G537 each contribute to the ATP site. N538 contacts Mg(2+). S540 provides a ligand contact to substrate.

This sequence belongs to the FGAMS family. As to quaternary structure, monomer. Part of the FGAM synthase complex composed of 1 PurL, 1 PurQ and 2 PurS subunits.

It localises to the cytoplasm. It catalyses the reaction N(2)-formyl-N(1)-(5-phospho-beta-D-ribosyl)glycinamide + L-glutamine + ATP + H2O = 2-formamido-N(1)-(5-O-phospho-beta-D-ribosyl)acetamidine + L-glutamate + ADP + phosphate + H(+). Its pathway is purine metabolism; IMP biosynthesis via de novo pathway; 5-amino-1-(5-phospho-D-ribosyl)imidazole from N(2)-formyl-N(1)-(5-phospho-D-ribosyl)glycinamide: step 1/2. In terms of biological role, part of the phosphoribosylformylglycinamidine synthase complex involved in the purines biosynthetic pathway. Catalyzes the ATP-dependent conversion of formylglycinamide ribonucleotide (FGAR) and glutamine to yield formylglycinamidine ribonucleotide (FGAM) and glutamate. The FGAM synthase complex is composed of three subunits. PurQ produces an ammonia molecule by converting glutamine to glutamate. PurL transfers the ammonia molecule to FGAR to form FGAM in an ATP-dependent manner. PurS interacts with PurQ and PurL and is thought to assist in the transfer of the ammonia molecule from PurQ to PurL. The protein is Phosphoribosylformylglycinamidine synthase subunit PurL of Sulfurimonas denitrificans (strain ATCC 33889 / DSM 1251) (Thiomicrospira denitrificans (strain ATCC 33889 / DSM 1251)).